We begin with the raw amino-acid sequence, 225 residues long: Superantigen-like protein 11 (225 aa).

The N-terminal stretch at 1 to 30 is a signal peptide; sequence MKLKNIAKASLALGILTTGMITTTAQPVKA. The sialyl Lewis X-binding stretch occupies residues 94–196; that stretch reads VDIFVVRENS…RITMKDGGFY (103 aa).

It belongs to the staphylococcal/streptococcal toxin family. In terms of assembly, homodimer (via its C-terminal domain). Interacts with host FCAR and SELPLG (via sialyl Lewis X).

The protein resides in the secreted. Its function is as follows. Secreted protein that plays a role in the inhibition of host immune system. Targets myeloid cells such as monocytes or granulocytes through binding with sialyllactosamine-containing glycoproteins. Prevents initial rolling of neutrophils toward the site of infection by interacting with host SELPLG. Disrupts neutrophil motility by induction of cell adhesion via interacting with glycans but independently of SELPLG. The polypeptide is Superantigen-like protein 11 (Staphylococcus aureus (strain Newman)).